Reading from the N-terminus, the 145-residue chain is NADH-quinone oxidoreductase subunit A 1 (145 aa).

The next 3 helical transmembrane spans lie at 18–38 (ILPL…LLLA), 71–91 (VPFY…VFIF), and 104–124 (GLIH…WLWL).

Belongs to the complex I subunit 3 family. In terms of assembly, NDH-1 is composed of 14 different subunits. Subunits NuoA, H, J, K, L, M, N constitute the membrane sector of the complex.

The protein resides in the cell inner membrane. It catalyses the reaction a quinone + NADH + 5 H(+)(in) = a quinol + NAD(+) + 4 H(+)(out). NDH-1 shuttles electrons from NADH, via FMN and iron-sulfur (Fe-S) centers, to quinones in the respiratory chain. The immediate electron acceptor for the enzyme in this species is believed to be ubiquinone. Couples the redox reaction to proton translocation (for every two electrons transferred, four hydrogen ions are translocated across the cytoplasmic membrane), and thus conserves the redox energy in a proton gradient. This is NADH-quinone oxidoreductase subunit A 1 from Geotalea uraniireducens (strain Rf4) (Geobacter uraniireducens).